A 136-amino-acid polypeptide reads, in one-letter code: uncharacterized protein (136 aa).

A helical membrane pass occupies residues L19 to F39. Disordered regions lie at residues S54–P87 and K112–Y136.

Its subcellular location is the membrane. This is an uncharacterized protein from Arabidopsis thaliana (Mouse-ear cress).